The primary structure comprises 292 residues: ATP synthase gamma chain (292 aa).

This sequence belongs to the ATPase gamma chain family. As to quaternary structure, F-type ATPases have 2 components, CF(1) - the catalytic core - and CF(0) - the membrane proton channel. CF(1) has five subunits: alpha(3), beta(3), gamma(1), delta(1), epsilon(1). CF(0) has three main subunits: a, b and c.

Its subcellular location is the cell inner membrane. Functionally, produces ATP from ADP in the presence of a proton gradient across the membrane. The gamma chain is believed to be important in regulating ATPase activity and the flow of protons through the CF(0) complex. The sequence is that of ATP synthase gamma chain from Rhodopseudomonas palustris (strain BisB18).